The following is a 239-amino-acid chain: Large ribosomal subunit protein uL1 (239 aa).

This sequence belongs to the universal ribosomal protein uL1 family. Part of the 50S ribosomal subunit.

In terms of biological role, binds directly to 23S rRNA. The L1 stalk is quite mobile in the ribosome, and is involved in E site tRNA release. Functionally, protein L1 is also a translational repressor protein, it controls the translation of the L11 operon by binding to its mRNA. The sequence is that of Large ribosomal subunit protein uL1 from Rhodococcus erythropolis (strain PR4 / NBRC 100887).